The chain runs to 183 residues: Large ribosomal subunit protein bL25 (183 aa).

It belongs to the bacterial ribosomal protein bL25 family. CTC subfamily. In terms of assembly, part of the 50S ribosomal subunit; part of the 5S rRNA/L5/L18/L25 subcomplex. Contacts the 5S rRNA. Binds to the 5S rRNA independently of L5 and L18.

In terms of biological role, this is one of the proteins that binds to the 5S RNA in the ribosome where it forms part of the central protuberance. This Desulfotalea psychrophila (strain LSv54 / DSM 12343) protein is Large ribosomal subunit protein bL25.